The primary structure comprises 182 residues: MANSEKTAAVAEIAEDFRGSSAAVLTEYRGLTVSQLTELRRALGETTRYAVVKNTLTKIAAAQAGVTGIDELLVGPTAVAFVGGDPVEAAKGLRDFARANPALVVKGGVVEGKAMNADEIRRLADLESREVLLAKMAGAMNGSLAKAVGLFAAPLSQVARLAEALRAQREETAGAEPVSVDA.

Belongs to the universal ribosomal protein uL10 family. Part of the ribosomal stalk of the 50S ribosomal subunit. The N-terminus interacts with L11 and the large rRNA to form the base of the stalk. The C-terminus forms an elongated spine to which L12 dimers bind in a sequential fashion forming a multimeric L10(L12)X complex.

Forms part of the ribosomal stalk, playing a central role in the interaction of the ribosome with GTP-bound translation factors. The polypeptide is Large ribosomal subunit protein uL10 (Parafrankia sp. (strain EAN1pec)).